The chain runs to 422 residues: Serine hydroxymethyltransferase (422 aa).

(6S)-5,6,7,8-tetrahydrofolate-binding positions include leucine 118 and glycine 122 to leucine 124. The residue at position 227 (lysine 227) is an N6-(pyridoxal phosphate)lysine. (6S)-5,6,7,8-tetrahydrofolate-binding positions include glutamate 243 and serine 351 to phenylalanine 353.

This sequence belongs to the SHMT family. Homodimer. Requires pyridoxal 5'-phosphate as cofactor.

It is found in the cytoplasm. The enzyme catalyses (6R)-5,10-methylene-5,6,7,8-tetrahydrofolate + glycine + H2O = (6S)-5,6,7,8-tetrahydrofolate + L-serine. Its pathway is one-carbon metabolism; tetrahydrofolate interconversion. It functions in the pathway amino-acid biosynthesis; glycine biosynthesis; glycine from L-serine: step 1/1. Its function is as follows. Catalyzes the reversible interconversion of serine and glycine with tetrahydrofolate (THF) serving as the one-carbon carrier. This reaction serves as the major source of one-carbon groups required for the biosynthesis of purines, thymidylate, methionine, and other important biomolecules. Also exhibits THF-independent aldolase activity toward beta-hydroxyamino acids, producing glycine and aldehydes, via a retro-aldol mechanism. This chain is Serine hydroxymethyltransferase, found in Fervidobacterium nodosum (strain ATCC 35602 / DSM 5306 / Rt17-B1).